Consider the following 359-residue polypeptide: Proton-gated ion channel (359 aa).

An N-terminal signal peptide occupies residues 1–43; the sequence is MFPTGWRPKLSESIAASRMLWQPMAAVAVVQIGLLWFSPPVWG. Residues 44-235 are Periplasmic-facing; sequence QDMVSPPPPI…LDYQLRISRQ (192 aa). A helical membrane pass occupies residues 236-258; sequence YFSYIPNIILPMLFILFISWTAF. At 259 to 261 the chain is on the cytoplasmic side; that stretch reads WST. The helical transmembrane segment at 262 to 286 threads the bilayer; that stretch reads SYEANVTLVVSTLIAHIAFNILVET. At 287 to 294 the chain is on the periplasmic side; the sequence is NLPKTPYM. A helical transmembrane segment spans residues 295–323; that stretch reads TYTGAIIFMIYLFYFVAVIEVTVQHYLKV. The Cytoplasmic portion of the chain corresponds to 324–326; it reads ESQ. A helical membrane pass occupies residues 327-359; it reads PARAASITRASRIAFPVVFLLANIILAFLFFGF.

This sequence belongs to the ligand-gated ion channel (TC 1.A.9) family. Homopentamer.

The protein resides in the cell inner membrane. With respect to regulation, tetraethylammonium (TEA) and tetrabutylammonium (TBA) inhibit the proton-activated currents in a dose- and voltage-dependent manner in vitro, whereas the blocker of acid sensing ion channels, amiloride, has no effect. Channel current of GLIC can be inhibited by inhaled and intravenous general anesthetics at and below concentrations used clinically. Ion conduction is also inhibited by lidocaine and by divalent transition metal ions such as cadmium ions. In terms of biological role, cationic channel with similar permeabilities for Na(+) and K(+), that is activated by an increase of the proton concentration on the extracellular side. Displays no permeability for chloride ions. Shows slow kinetics of activation, no desensitization and a single channel conductance of 8 pS. Might contribute to adaptation to external pH change. In Gloeobacter violaceus (strain ATCC 29082 / PCC 7421), this protein is Proton-gated ion channel (glvI).